We begin with the raw amino-acid sequence, 643 residues long: Threonine--tRNA ligase (643 aa).

Residues 1–62 (MSFSVTLPDG…DEDVEAAIIT (62 aa)) form the TGS domain. The interval 239–537 (DHRTIGRDLD…LTEIYKGAFP (299 aa)) is catalytic. Zn(2+)-binding residues include cysteine 333, histidine 384, and histidine 514.

The protein belongs to the class-II aminoacyl-tRNA synthetase family. Homodimer. Requires Zn(2+) as cofactor.

The protein localises to the cytoplasm. It carries out the reaction tRNA(Thr) + L-threonine + ATP = L-threonyl-tRNA(Thr) + AMP + diphosphate + H(+). Catalyzes the attachment of threonine to tRNA(Thr) in a two-step reaction: L-threonine is first activated by ATP to form Thr-AMP and then transferred to the acceptor end of tRNA(Thr). Also edits incorrectly charged L-seryl-tRNA(Thr). This is Threonine--tRNA ligase from Lactobacillus gasseri (strain ATCC 33323 / DSM 20243 / BCRC 14619 / CIP 102991 / JCM 1131 / KCTC 3163 / NCIMB 11718 / NCTC 13722 / AM63).